Consider the following 204-residue polypeptide: LexA repressor (204 aa).

Residues 28 to 48 (RAEIAQELGFKSPNAAEEHLK) constitute a DNA-binding region (H-T-H motif). Residues S125 and K162 each act as for autocatalytic cleavage activity in the active site.

It belongs to the peptidase S24 family. Homodimer.

It catalyses the reaction Hydrolysis of Ala-|-Gly bond in repressor LexA.. Functionally, represses a number of genes involved in the response to DNA damage (SOS response), including recA and lexA. In the presence of single-stranded DNA, RecA interacts with LexA causing an autocatalytic cleavage which disrupts the DNA-binding part of LexA, leading to derepression of the SOS regulon and eventually DNA repair. The protein is LexA repressor of Ectopseudomonas mendocina (strain ymp) (Pseudomonas mendocina).